The chain runs to 546 residues: Probable protein kinase UbiB (546 aa).

Residues 124–502 enclose the Protein kinase domain; that stretch reads DFDIQPLASA…HVRQSQSRYL (379 aa). ATP-binding positions include 130-138 and K153; that span reads LASASIAQV. The active-site Proton acceptor is the D288. The next 2 helical transmembrane spans lie at 501–521 and 522–542; these read YLLG…VNRP and EWGL…LVGW.

This sequence belongs to the ABC1 family. UbiB subfamily.

It is found in the cell inner membrane. It functions in the pathway cofactor biosynthesis; ubiquinone biosynthesis [regulation]. Its function is as follows. Is probably a protein kinase regulator of UbiI activity which is involved in aerobic coenzyme Q (ubiquinone) biosynthesis. This is Probable protein kinase UbiB from Salmonella gallinarum (strain 287/91 / NCTC 13346).